The following is a 664-amino-acid chain: DNA ligase (664 aa).

Residues 32–36 (DKEYD) and 80–81 (SL) each bind NAD(+). Lysine 122 (N6-AMP-lysine intermediate) is an active-site residue. Arginine 144, glutamate 178, and lysine 314 together coordinate NAD(+). Cysteine 407, cysteine 410, cysteine 423, and cysteine 429 together coordinate Zn(2+). A BRCT domain is found at 587-664 (IDENPFMDKT…NEEEFSNKIK (78 aa)).

Belongs to the NAD-dependent DNA ligase family. LigA subfamily. The cofactor is Mg(2+). Requires Mn(2+) as cofactor.

The enzyme catalyses NAD(+) + (deoxyribonucleotide)n-3'-hydroxyl + 5'-phospho-(deoxyribonucleotide)m = (deoxyribonucleotide)n+m + AMP + beta-nicotinamide D-nucleotide.. DNA ligase that catalyzes the formation of phosphodiester linkages between 5'-phosphoryl and 3'-hydroxyl groups in double-stranded DNA using NAD as a coenzyme and as the energy source for the reaction. It is essential for DNA replication and repair of damaged DNA. The protein is DNA ligase of Clostridium botulinum (strain Langeland / NCTC 10281 / Type F).